The sequence spans 207 residues: Transcriptional regulator YqjI (207 aa).

Positions 1-40 (MSHHHEGCCKHEGQPRHEGCCKGEKSEHEHCGHGHQHEHG) are enriched in basic and acidic residues. Positions 1–46 (MSHHHEGCCKHEGQPRHEGCCKGEKSEHEHCGHGHQHEHGQCCGGR) are disordered.

As to quaternary structure, oligomer (probable predominant form) and monomer.

Divalent metals such as nickel and iron have a similar negative effect on YqjI DNA-binding activity. Its function is as follows. Represses the expression of YqjH which is involved in iron homeostasis under excess nickel conditions. Also represses its own expression. The protein is Transcriptional regulator YqjI (yqjI) of Escherichia coli (strain K12).